Here is an 82-residue protein sequence, read N- to C-terminus: Beta-insect toxin AaBTxL1 (82 aa).

Residues 1-22 (MMKLVLFSVIVILFSLIGSIHG) form the signal peptide. In terms of domain architecture, LCN-type CS-alpha/beta spans 25 to 82 (VPGNYPLDRSGKKYPCTITWKKNPSCIQICKKHGVKYGYCFDFQCWCEIFGRLKTFKI). 3 disulfides stabilise this stretch: C40–C64, C50–C69, and C54–C71.

The protein belongs to the long (3 C-C) scorpion toxin superfamily. Sodium channel inhibitor family. Beta subfamily. As to expression, expressed by the venom gland.

It localises to the secreted. Functionally, shifts the voltage of activation of para/tipE voltage-dependent sodium channels (Nav) toward more negative potentials. In Androctonus australis (Sahara scorpion), this protein is Beta-insect toxin AaBTxL1.